Here is a 225-residue protein sequence, read N- to C-terminus: Protein E26 (225 aa).

In terms of assembly, interacts with proteins IE0 and IE1. Interacts with protein FP25K. Interacts with host importin alpha-16. Palmitoylated.

It localises to the host nucleus inner membrane. Its subcellular location is the virion. The protein localises to the host cytoplasm. The protein resides in the host nucleus. Plays a role in the sorting of ODV envelope proteins to the host inner nuclear membrane. May facilitate the fusion and release of nucleocapsids into the cytoplasm. Modulates the expression levels of IE0 and IE1. The polypeptide is Protein E26 (DA26) (Lepidoptera (butterflies and moths)).